The sequence spans 320 residues: Malate dehydrogenase (320 aa).

NAD(+) is bound by residues 10–15 (GSGMIG) and Asp34. Residues Arg83 and Arg89 each coordinate substrate. NAD(+) is bound by residues Asn96 and 119 to 121 (ITN). Residues Asn121 and Arg152 each coordinate substrate. His176 (proton acceptor) is an active-site residue.

It belongs to the LDH/MDH superfamily. MDH type 3 family.

The catalysed reaction is (S)-malate + NAD(+) = oxaloacetate + NADH + H(+). Its function is as follows. Catalyzes the reversible oxidation of malate to oxaloacetate. This chain is Malate dehydrogenase, found in Allorhizobium ampelinum (strain ATCC BAA-846 / DSM 112012 / S4) (Agrobacterium vitis (strain S4)).